Consider the following 206-residue polypeptide: LexA repressor (206 aa).

Positions 28–48 (RAEIATRLGFKSANAAEEHLK) form a DNA-binding region, H-T-H motif. Residues Ser123 and Lys160 each act as for autocatalytic cleavage activity in the active site.

The protein belongs to the peptidase S24 family. Homodimer.

It carries out the reaction Hydrolysis of Ala-|-Gly bond in repressor LexA.. Represses a number of genes involved in the response to DNA damage (SOS response), including recA and lexA. In the presence of single-stranded DNA, RecA interacts with LexA causing an autocatalytic cleavage which disrupts the DNA-binding part of LexA, leading to derepression of the SOS regulon and eventually DNA repair. This is LexA repressor from Shewanella sp. (strain MR-4).